Reading from the N-terminus, the 464-residue chain is Soluble pyridine nucleotide transhydrogenase (464 aa).

35 to 44 (EDKSQVGGNC) is a binding site for FAD.

The protein belongs to the class-I pyridine nucleotide-disulfide oxidoreductase family. Requires FAD as cofactor.

It is found in the cytoplasm. It carries out the reaction NAD(+) + NADPH = NADH + NADP(+). In terms of biological role, conversion of NADPH, generated by peripheral catabolic pathways, to NADH, which can enter the respiratory chain for energy generation. This is Soluble pyridine nucleotide transhydrogenase from Hahella chejuensis (strain KCTC 2396).